Here is a 192-residue protein sequence, read N- to C-terminus: Peptidyl-tRNA hydrolase (192 aa).

Y14 contributes to the tRNA binding site. H19 acts as the Proton acceptor in catalysis. TRNA contacts are provided by Y64, N66, and N112.

The protein belongs to the PTH family. Monomer.

The protein localises to the cytoplasm. The catalysed reaction is an N-acyl-L-alpha-aminoacyl-tRNA + H2O = an N-acyl-L-amino acid + a tRNA + H(+). In terms of biological role, hydrolyzes ribosome-free peptidyl-tRNAs (with 1 or more amino acids incorporated), which drop off the ribosome during protein synthesis, or as a result of ribosome stalling. Functionally, catalyzes the release of premature peptidyl moieties from peptidyl-tRNA molecules trapped in stalled 50S ribosomal subunits, and thus maintains levels of free tRNAs and 50S ribosomes. In Anaeromyxobacter dehalogenans (strain 2CP-1 / ATCC BAA-258), this protein is Peptidyl-tRNA hydrolase.